Consider the following 260-residue polypeptide: Putative ATP-binding protein BruAb2_1123 (260 aa).

The region spanning 5–228 is the ABC transporter domain; the sequence is ISFNNVVMRY…DLPYPRTEAI (224 aa). An ATP-binding site is contributed by 37–44; the sequence is GPSGCGKS.

This sequence belongs to the ABC transporter superfamily. The complex is composed of two ATP-binding proteins (BruAb2_1123), two transmembrane proteins (BruAb2_1124) and a solute-binding protein (BruAb2_1122).

It localises to the cell inner membrane. Its function is as follows. Probably part of an ABC transporter complex. Probably Responsible for energy coupling to the transport system. This is Putative ATP-binding protein BruAb2_1123 from Brucella abortus biovar 1 (strain 9-941).